The following is a 942-amino-acid chain: Chitin synthase 4 (942 aa).

Residues 1–124 (MPPRYPFGGG…FDEHDGDVPL (124 aa)) form a disordered region. The span at 14–26 (DEAHHQPLERRTT) shows a compositional bias: basic and acidic residues. The span at 27 to 36 (AEAQGNSFTH) shows a compositional bias: polar residues. Asparagine 604 carries N-linked (GlcNAc...) asparagine glycosylation. A run of 7 helical transmembrane segments spans residues 641-661 (TIQLIFSWFGMANFFIAFFIL), 674-694 (VPNLVLSYIYVAFIIFCFLLS), 709-729 (AMVVFALLTVYMTGAAIYLAV), 755-775 (IVISLAATFGIWLIASIMFLE), 783-803 (IVQYLLMAPTFVNVISIYAFA), 885-905 (VLCWSLSNAALVVGILNISSI), and 909-929 (TIYMGFLLYSVAGLALFRMMG).

It belongs to the chitin synthase family. Class I subfamily.

The protein resides in the cell membrane. The protein localises to the cytoplasmic vesicle membrane. It catalyses the reaction [(1-&gt;4)-N-acetyl-beta-D-glucosaminyl](n) + UDP-N-acetyl-alpha-D-glucosamine = [(1-&gt;4)-N-acetyl-beta-D-glucosaminyl](n+1) + UDP + H(+). Functionally, polymerizes chitin, a structural polymer of the cell wall and septum, by transferring the sugar moiety of UDP-GlcNAc to the non-reducing end of the growing chitin polymer. This Mycosarcoma maydis (Corn smut fungus) protein is Chitin synthase 4.